The chain runs to 120 residues: Cell cycle protein GpsB (120 aa).

The stretch at 34-74 (LDDVIKDYDTYNKELERLNDENERLRAKVDELNRQVEVGSS) forms a coiled coil. The segment at 69–90 (VEVGSSMSNQTASRQPVSSATN) is disordered. The span at 71–90 (VGSSMSNQTASRQPVSSATN) shows a compositional bias: polar residues.

Belongs to the GpsB family. In terms of assembly, forms polymers through the coiled coil domains. Interacts with PBP1, MreC and EzrA.

The protein resides in the cytoplasm. In terms of biological role, divisome component that associates with the complex late in its assembly, after the Z-ring is formed, and is dependent on DivIC and PBP2B for its recruitment to the divisome. Together with EzrA, is a key component of the system that regulates PBP1 localization during cell cycle progression. Its main role could be the removal of PBP1 from the cell pole after pole maturation is completed. Also contributes to the recruitment of PBP1 to the division complex. Not essential for septum formation. The protein is Cell cycle protein GpsB of Limosilactobacillus reuteri (strain DSM 20016) (Lactobacillus reuteri).